Reading from the N-terminus, the 605-residue chain is Protein kinase wis1 (605 aa).

Over residues 1–20 (MSSPNNQPLSCSLRQLSISP) the composition is skewed to polar residues. The tract at residues 1–141 (MSSPNNQPLS…TPPGPFPGGL (141 aa)) is disordered. Composition is skewed to low complexity over residues 31 to 73 (GSLL…SSPS) and 90 to 105 (RLGRSTSSRSRNSLNL). A compositionally biased stretch (basic and acidic residues) spans 106–115 (DMKDPSEKPR). A Phosphoserine modification is found at S168. A compositionally biased stretch (polar residues) spans 188-200 (SQLAGRLSNSPVK). The segment at 188-263 (SQLAGRLSNS…PSSMASRRGL (76 aa)) is disordered. Residues 244 to 256 (SNSNPTSPVSPSS) show a composition bias toward low complexity. S253 is subject to Phosphoserine. Residues 320 to 579 (IIKLEELGKG…YHELANHPWL (260 aa)) enclose the Protein kinase domain. ATP-binding positions include 326–334 (LGKGNYGVV) and K349. Catalysis depends on D441, which acts as the Proton acceptor. A Phosphoserine modification is found at S469. T473 bears the Phosphothreonine mark.

Belongs to the protein kinase superfamily. STE Ser/Thr protein kinase family. MAP kinase kinase subfamily. In terms of processing, dephosphorylated by pyp1 and pyp2.

It catalyses the reaction L-seryl-[protein] + ATP = O-phospho-L-seryl-[protein] + ADP + H(+). It carries out the reaction L-threonyl-[protein] + ATP = O-phospho-L-threonyl-[protein] + ADP + H(+). The enzyme catalyses L-tyrosyl-[protein] + ATP = O-phospho-L-tyrosyl-[protein] + ADP + H(+). In terms of biological role, dosage-dependent regulator of mitosis with serine/ threonine protein kinase activity. May play a role in the integration of nutritional sensing with the control over entry into mitosis. It may interact with cdc25, wee1 and win1. May activate sty1. The polypeptide is Protein kinase wis1 (wis1) (Schizosaccharomyces pombe (strain 972 / ATCC 24843) (Fission yeast)).